A 702-amino-acid chain; its full sequence is Polyribonucleotide nucleotidyltransferase (702 aa).

Mg(2+) is bound by residues aspartate 485 and aspartate 491. Residues 552–611 (PKTSTLQIDPEKIRDVIGAGGKVINKIIADTGVKIDIKEDGLVYVSSAESEGVKEAVKII) enclose the KH domain. The 69-residue stretch at 621–689 (GEIYLGKVTK…SQGRINLSRK (69 aa)) folds into the S1 motif domain.

It belongs to the polyribonucleotide nucleotidyltransferase family. The cofactor is Mg(2+).

The protein resides in the cytoplasm. It catalyses the reaction RNA(n+1) + phosphate = RNA(n) + a ribonucleoside 5'-diphosphate. Functionally, involved in mRNA degradation. Catalyzes the phosphorolysis of single-stranded polyribonucleotides processively in the 3'- to 5'-direction. In Clostridium perfringens (strain ATCC 13124 / DSM 756 / JCM 1290 / NCIMB 6125 / NCTC 8237 / Type A), this protein is Polyribonucleotide nucleotidyltransferase.